A 90-amino-acid chain; its full sequence is UPF0223 protein lwe1035 (90 aa).

The protein belongs to the UPF0223 family.

The protein is UPF0223 protein lwe1035 of Listeria welshimeri serovar 6b (strain ATCC 35897 / DSM 20650 / CCUG 15529 / CIP 8149 / NCTC 11857 / SLCC 5334 / V8).